Reading from the N-terminus, the 418-residue chain is UDP-N-acetylglucosamine 1-carboxyvinyltransferase (418 aa).

22–23 (KN) lines the phosphoenolpyruvate pocket. Arginine 91 lines the UDP-N-acetyl-alpha-D-glucosamine pocket. Residue cysteine 115 is the Proton donor of the active site. Cysteine 115 carries the 2-(S-cysteinyl)pyruvic acid O-phosphothioketal modification. UDP-N-acetyl-alpha-D-glucosamine contacts are provided by aspartate 305 and isoleucine 327.

It belongs to the EPSP synthase family. MurA subfamily.

It is found in the cytoplasm. It catalyses the reaction phosphoenolpyruvate + UDP-N-acetyl-alpha-D-glucosamine = UDP-N-acetyl-3-O-(1-carboxyvinyl)-alpha-D-glucosamine + phosphate. It functions in the pathway cell wall biogenesis; peptidoglycan biosynthesis. In terms of biological role, cell wall formation. Adds enolpyruvyl to UDP-N-acetylglucosamine. This is UDP-N-acetylglucosamine 1-carboxyvinyltransferase from Aeromonas hydrophila subsp. hydrophila (strain ATCC 7966 / DSM 30187 / BCRC 13018 / CCUG 14551 / JCM 1027 / KCTC 2358 / NCIMB 9240 / NCTC 8049).